The following is a 1220-amino-acid chain: Putative cell agglutination protein SPAPB2C8.01 (1220 aa).

Residues 1–21 (MAVSRLLILICLYSFVTFAYP) form the signal peptide. N-linked (GlcNAc...) asparagine glycans are attached at residues Asn-44, Asn-72, Asn-131, and Asn-160. Repeat copies occupy residues 110–145 (NTITTTLYSGSLEFTTTLDSANGTTPATIEVVEPAA), 146–181 (GTVTTTIYSGTTPFNTTLASATDTVPGTVEVVEPEA), 182–217 (GTVTTTVYSGTQEYTTTLATASGTVSGTVEVVDTAA), 218–253 (GTVTTTIYSGTTPFNTTLASATDTVPGTVEVVEPEA), 254–289 (GTVTTTVYSGTQEYTTTLATASGTVSGTVEVVDTAA), 290–325 (GTVTTTIYSGTTPFNTTLASATDTVPGTVEVVEPEA), 326–361 (GTVTTTVYSGTQEYTTTLATASGTVSGTVEVVDTAA), 362–397 (GTVTTTIYSGTTPFNTTLASATDTVPGTVEVVEPEA), 398–433 (GTVTTTVYSGTQEYTTTLATASGTVSGTVEVVDTAA), 434–469 (GTVTTTIYSGTTPFNTTLASATDTVPGTVEVVEPEA), 470–505 (GTVTTTVYSGTQEYTTTLATASGTVSGTVEVVDTAA), 506–541 (GTVTTTIYSGTTPFNTTLASATDTVPGTVEVVEPEA), 542–577 (GTVTTTVYSGTQEYTTTLATASGTVSGTVEVVDTAA), 578–613 (GTVTTTIYSGTTPFNTTLASATDTVPGTVEVVEPEA), 614–649 (GTVTTTVYSGTQEYTTTLATASGTVSGTVEVIEPAA), 650–685 (GTVTTTVYSGTQEYTTTLATASGTVSGTVEVIEPAA), 686–721 (GTVTSTVYSGTQEYTTTLATASGTVSGTVEVIEPAA), 722–757 (GTVTTTVYSGTQEYTTTLATASGTVSGTVEVIEPAA), 758–793 (GTVTTTVYSGSEVYTTTLASASESVPGTVEVVDPEA), 794–829 (GSVTTTIYSGSVEYTTVLADASGSVTGTVEVVEPAA), 830–865 (GTVTTTVYSGSEVYTTTLASASESVPGTVEVVDPEA), 866–901 (GSVTTTIYSGSVEYTTVLADASGSVTGTVEVVEPAA), 902–937 (GTVTGTLTSGSQFFTTTIAQASGSVSGNVEVIEPSG), and 938–973 (STVTSTIYSGSESFTTTLAVGSGTIPGTVEVILPAP). Residues 110-973 (NTITTTLYSG…GTVEVILPAP (864 aa)) form a 24 X 36 AA approximate tandem repeats region. Asn-232 carries N-linked (GlcNAc...) asparagine glycosylation. Asn-304 carries N-linked (GlcNAc...) asparagine glycosylation. The N-linked (GlcNAc...) asparagine glycan is linked to Asn-376. N-linked (GlcNAc...) asparagine glycosylation is present at Asn-448. Asn-520 is a glycosylation site (N-linked (GlcNAc...) asparagine). The N-linked (GlcNAc...) asparagine glycan is linked to Asn-592. Positions 1039–1202 (FTQPAYFGSS…YAATSYAYTA (164 aa)) constitute a PA14 domain.

This sequence belongs to the mam3/map4 family.

It localises to the cell surface. In terms of biological role, may be involved in agglutination during conjugation or other aspects of colony formation. This Schizosaccharomyces pombe (strain 972 / ATCC 24843) (Fission yeast) protein is Putative cell agglutination protein SPAPB2C8.01.